A 543-amino-acid chain; its full sequence is MVRPQDTVAYEDLSEDYTQKKWKGLALSQRALHWNMMLENDRSMASLGRNMMESSELTPKQEIFKGSESSNSTSGGLFGVVPGGTETGDVCEDTFKELEGQPSNEEGSRLESDFLEIIDEDKKKSTKDRYEEYKEVEEHPPLSSSPVEHEGVLKGQKSYRCDECGKAFYWSSHLIGHRRIHTGEKPYECNECGKTFRQTSQLIVHLRTHTGEKPYECSECGKAYRHSSHLIQHQRLHNGEKPYKCNECAKAFNQSSKLFDHQRTHTGEKPYECKECGAAFSRSKNLVRHQFLHTGKKPYKCNECGRAFCSNRNLIDHQRTHTGEKPYKCNECGKAFSRSKCLIRHQSLHTGEKPYKCSECGKAFNQISQLVEHERIHTGEKPFKCSECGKAFGLSKCLIRHQRLHTSEKPYKCNECGKSFNQNSYLIIHQRIHTGEKPYECNECGKVFSYNSSLMVHQRTHTGEKPYKCNSCGKAFSDSSQLTVHQRVHTGEKNLMNVLSVGKPLVSVPLLITTSELMLERSPQVWLGHLLKAWFSETDSKDL.

Residues 8-82 form the KRAB domain; that stretch reads VAYEDLSEDY…TSGGLFGVVP (75 aa). Serine 145 is modified (phosphoserine). 12 C2H2-type zinc fingers span residues 159 to 181, 187 to 209, 215 to 237, 243 to 265, 271 to 293, 299 to 321, 327 to 349, 355 to 377, 383 to 405, 411 to 433, 439 to 461, and 467 to 489; these read YRCD…RRIH, YECN…LRTH, YECS…QRLH, YKCN…QRTH, YECK…QFLH, YKCN…QSLH, YKCS…ERIH, FKCS…QRLH, YKCN…QRIH, YECN…QRTH, and YKCN…QRVH.

Belongs to the krueppel C2H2-type zinc-finger protein family.

Its subcellular location is the nucleus. Its function is as follows. May be involved in transcriptional regulation. This chain is Zinc finger protein 852 (ZNF852), found in Homo sapiens (Human).